We begin with the raw amino-acid sequence, 627 residues long: MAKFKKDLTTKNKDTDRLSEEIDIPETKVNAFQAQQARIDEAQRDLLESNQQKSARKRFEENKTKEKVKKIFNNAKKKITRTKLKKLQDQVGNHIIMGTLPTIPNTLPTSKPTMQLSNDINRTVSEDEDGYLVPCKAQPQIYTVILPSQEIENHKSMDSDLWTLSSKTLGKEIDEVHPNIVLLSEKETEAKIVEDVKISNTTNSRGVFENTSKSFGQHNNFKLTQDLYGKDRKQYYKQEINSINSLDSAVLVESQQFKKTKSLEDIEDGSLSSQLKQTKYKSVLSPSSYVNDMFSNEHHQNSSIELPKLLHSSLSDTNSSLNDCINQLRCANTSDVYNLSYTLSNKTKQLSIDELKNTLEQMQTSPNINIVLPMLIRVQQDYVNEVAEIYQQTIEQRKQNPSEQAKNQEEVVAAYFTQEYDKLKIINSFRSLKTDSITNTSLASSVNIFGSNEDLSWDNTGDIGVGYRYGPEHSCPTPDDRLSSKLIDMSNKNTKNVKGLEEGVTIYDSIDSVADPLKSNDVSFEEINEALKQLSAAISETVINSSESKVQEDPEDILDGSILQAMLNSNNDQSIESLSLGSEEEQGQEETEASIQNAGDKKLLPVPASSNESTLLLSDCKKMNIYH.

The span at Met1–Glu20 shows a compositional bias: basic and acidic residues. Disordered regions lie at residues Met1–Ile22 and Leu578–Val606. Residues Ser582 to Glu592 show a composition bias toward acidic residues.

This is an uncharacterized protein from Rickettsia prowazekii (strain Madrid E).